A 583-amino-acid polypeptide reads, in one-letter code: MEPDLHDQQQQQRVHSVVIITLPPSDDPSQGKTISAFTLTDHDYPLEIPPEDNPNPSFQPDPLHRNQQSRLLFSDLSMNSPRLVLGLLGISLLAVAFYASVFPNSVQMFRVSPDERNRDDDDNLRETASFVFPVYHKLRAREFHERILEEDLGLENENFVESMDLELVNPVKVNDVLSTSAGSIDSSTTIFPVGGNVYPDGLYYTRILVGKPEDGQYYHLDIDTGSELTWIQCDAPCTSCAKGANQLYKPRKDNLVRSSEAFCVEVQRNQLTEHCENCHQCDYEIEYADHSYSMGVLTKDKFHLKLHNGSLAESDIVFGCGYDQQGLLLNTLLKTDGILGLSRAKISLPSQLASRGIISNVVGHCLASDLNGEGYIFMGSDLVPSHGMTWVPMLHDSRLDAYQMQVTKMSYGQGMLSLDGENGRVGKVLFDTGSSYTYFPNQAYSQLVTSLQEVSGLELTRDDSDETLPICWRAKTNFPFSSLSDVKKFFRPITLQIGSKWLIISRKLLIQPEDYLIISNKGNVCLGILDGSSVHDGSTIILGDISMRGHLIVYDNVKRRIGWMKSDCVRPREIDHNVPFFQG.

Residues 83 to 103 (LVLGLLGISLLAVAFYASVFP) traverse the membrane as a helical segment. Residues 203-564 (YYTRILVGKP…DNVKRRIGWM (362 aa)) enclose the Peptidase A1 domain. Residues Asp-223 and Asp-431 contribute to the active site.

It belongs to the peptidase A1 family. In terms of assembly, interacts with BAG6 and BAGP1.

It is found in the membrane. Involved in proteolytic processing of BAG6 and plant basal immunity. In Arabidopsis thaliana (Mouse-ear cress), this protein is Aspartyl protease APCB1.